Reading from the N-terminus, the 370-residue chain is Homospermidine synthase (370 aa).

This sequence belongs to the deoxyhypusine synthase family. As to quaternary structure, homotetramer. The cofactor is NAD(+).

The enzyme catalyses putrescine + spermidine = sym-homospermidine + propane-1,3-diamine. It functions in the pathway alkaloid biosynthesis; pyrrolizidine alkaloid biosynthesis. Catalyzes the transfer of an aminobutyl unit from spermidine onto putrescine. The resulting polyamine homospermidine is a precursor in the biosynthesis of pyrrolizidine alkaloids. The polypeptide is Homospermidine synthase (HSS1) (Senecio vulgaris (Common groundsel)).